Reading from the N-terminus, the 183-residue chain is Peptide deformylase (183 aa).

The Fe cation site is built by Cys-90 and His-132. Residue Glu-133 is part of the active site. Residue His-136 coordinates Fe cation.

The protein belongs to the polypeptide deformylase family. Fe(2+) is required as a cofactor.

The catalysed reaction is N-terminal N-formyl-L-methionyl-[peptide] + H2O = N-terminal L-methionyl-[peptide] + formate. Functionally, removes the formyl group from the N-terminal Met of newly synthesized proteins. Requires at least a dipeptide for an efficient rate of reaction. N-terminal L-methionine is a prerequisite for activity but the enzyme has broad specificity at other positions. This Parafrankia sp. (strain EAN1pec) protein is Peptide deformylase.